A 789-amino-acid chain; its full sequence is E3 UFM1-protein ligase 1 (789 aa).

Positions 2–212 (AADWEEIRRL…VSNLITRYGF (211 aa)) are required for E3 UFM1-protein ligase activity. 2 disordered regions span residues 407-470 (LENS…TGRN) and 743-763 (SKKA…ADTI). A compositionally biased stretch (basic residues) spans 444–453 (KIKKTKKKGR). Residues 748–760 (QEDDNKTEEEEGA) show a composition bias toward acidic residues.

Belongs to the UFL1 family. Catalytic component of the UFM1 ribosome E3 ligase (UREL) complex. Interacts with E2-like enzyme UFC1.

Its subcellular location is the endoplasmic reticulum membrane. The protein resides in the cytoplasm. The protein localises to the cytosol. It localises to the nucleus. It is found in the chromosome. Functionally, E3 protein ligase that mediates ufmylation, the covalent attachment of the ubiquitin-like modifier UFM1 to lysine residues on target proteins, and which plays a key role in various processes, such as ribosome recycling, response to DNA damage, interferon response or reticulophagy (also called ER-phagy). As part of the UREL complex, plays a key role in ribosome recycling by catalyzing mono-ufmylation of RPL26/uL24 subunit of the 60S ribosome. Ufmylation of RPL26/uL24 occurs on free 60S ribosomes following ribosome dissociation: it weakens the junction between post-termination 60S subunits and SEC61 translocons, promoting release and recycling of the large ribosomal subunit from the endoplasmic reticulum membrane. Ufmylation of RPL26/uL24 and subsequent 60S ribosome recycling either take place after normal termination of translation or after ribosome stalling during cotranslational translocation at the endoplasmic reticulum. Involved in reticulophagy in response to endoplasmic reticulum stress by mediating ufmylation of proteins such as CYB5R3 and RPN1, thereby promoting lysosomal degradation of ufmylated proteins. Ufmylation in response to endoplasmic reticulum stress is essential for processes such as hematopoiesis, blood vessel morphogenesis or inflammatory response. This Gallus gallus (Chicken) protein is E3 UFM1-protein ligase 1.